The primary structure comprises 141 residues: Hemoglobin subunit alpha-1 (141 aa).

One can recognise a Globin domain in the interval 1–141 (VLSGSDKNNV…VGNVLTAKYR (141 aa)). H58 provides a ligand contact to O2. H87 serves as a coordination point for heme b.

This sequence belongs to the globin family. In terms of assembly, heterotetramer of two alpha chains and two beta chains. In terms of tissue distribution, red blood cells.

Involved in oxygen transport from the lung to the various peripheral tissues. The sequence is that of Hemoglobin subunit alpha-1 from Stercorarius maccormicki (South polar skua).